Reading from the N-terminus, the 500-residue chain is Probable cytosol aminopeptidase 1 (500 aa).

Positions 263 and 268 each coordinate Mn(2+). Lysine 275 is an active-site residue. Aspartate 287, aspartate 346, and glutamate 348 together coordinate Mn(2+). Residue arginine 350 is part of the active site.

This sequence belongs to the peptidase M17 family. Requires Mn(2+) as cofactor.

The protein resides in the cytoplasm. The catalysed reaction is Release of an N-terminal amino acid, Xaa-|-Yaa-, in which Xaa is preferably Leu, but may be other amino acids including Pro although not Arg or Lys, and Yaa may be Pro. Amino acid amides and methyl esters are also readily hydrolyzed, but rates on arylamides are exceedingly low.. The enzyme catalyses Release of an N-terminal amino acid, preferentially leucine, but not glutamic or aspartic acids.. Presumably involved in the processing and regular turnover of intracellular proteins. Catalyzes the removal of unsubstituted N-terminal amino acids from various peptides. The sequence is that of Probable cytosol aminopeptidase 1 (pepA1) from Shewanella oneidensis (strain ATCC 700550 / JCM 31522 / CIP 106686 / LMG 19005 / NCIMB 14063 / MR-1).